The following is a 402-amino-acid chain: Deoxyguanosinetriphosphate triphosphohydrolase-like protein (402 aa).

Residues 69–217 (RLTHSLEVAQ…AAIADDIAYD (149 aa)) form the HD domain.

It belongs to the dGTPase family. Type 2 subfamily.

This is Deoxyguanosinetriphosphate triphosphohydrolase-like protein from Bradyrhizobium diazoefficiens (strain JCM 10833 / BCRC 13528 / IAM 13628 / NBRC 14792 / USDA 110).